Consider the following 334-residue polypeptide: UstYa family oxidase aprY (334 aa).

A helical transmembrane segment spans residues 55-75 (IWILLTITNLIILGITVSMIV). Asn112 carries an N-linked (GlcNAc...) asparagine glycan. The HXXHC 1 motif lies at 185-189 (HQIHC). Residue Asn214 is glycosylated (N-linked (GlcNAc...) asparagine). Residues 223–227 (HLGHC) carry the HXXHC 2 motif. The span at 306 to 318 (SELGEKLGKHQKQ) shows a compositional bias: basic and acidic residues. Positions 306 to 334 (SELGEKLGKHQKQEGVLGQAGHQHTKRHE) are disordered.

Belongs to the ustYa family.

The protein resides in the membrane. It participates in secondary metabolite biosynthesis. Its function is as follows. UstYa family oxidase; part of the gene cluster that mediates the biosynthesis of the asperipin-2a, a bicyclic peptide that possesses two macrocyclic ether rings consisting of 14- and 17-membered paracyclophans. Within the pathway, aprY is responsible for the synthesis of the bicyclic structure of asperipin-2a. The pathway starts with the processing of the precursor aprA by kexin proteases to produce 11 identical copies of the hexapeptide Phe-Tyr-Tyr-Thr-Gly-Tyr. Macrocyclization of asperipin-2a may accompany an alpha-hydroxylation-dehydration sequence to give an imine, which is readily hydrolyzed to yield putative ketone intermediate. The reductase aprR may be required for the final reduction to yield asperipin-2a. This chain is UstYa family oxidase aprY, found in Aspergillus flavus (strain ATCC 200026 / FGSC A1120 / IAM 13836 / NRRL 3357 / JCM 12722 / SRRC 167).